Here is a 919-residue protein sequence, read N- to C-terminus: Isoleucine--tRNA ligase (919 aa).

The 'HIGH' region signature appears at 57 to 67; it reads PYANGNIHIGH. Glutamate 569 contributes to the L-isoleucyl-5'-AMP binding site. A 'KMSKS' region motif is present at residues 610–614; sequence KMSKS. Residue lysine 613 coordinates ATP. Positions 896, 899, 911, and 914 each coordinate Zn(2+).

The protein belongs to the class-I aminoacyl-tRNA synthetase family. IleS type 1 subfamily. In terms of assembly, monomer. The cofactor is Zn(2+).

The protein localises to the cytoplasm. It catalyses the reaction tRNA(Ile) + L-isoleucine + ATP = L-isoleucyl-tRNA(Ile) + AMP + diphosphate. Catalyzes the attachment of isoleucine to tRNA(Ile). As IleRS can inadvertently accommodate and process structurally similar amino acids such as valine, to avoid such errors it has two additional distinct tRNA(Ile)-dependent editing activities. One activity is designated as 'pretransfer' editing and involves the hydrolysis of activated Val-AMP. The other activity is designated 'posttransfer' editing and involves deacylation of mischarged Val-tRNA(Ile). This chain is Isoleucine--tRNA ligase, found in Aliarcobacter butzleri (strain RM4018) (Arcobacter butzleri).